The sequence spans 344 residues: Lipase chaperone (344 aa).

A helical membrane pass occupies residues 14 to 34 (AVVYGVVGLAAIAGVAMWSGA). Positions 39-78 (ATGASGESPEASVAGGSVTAPPQAAVPASTGLPPSLAGSS) are disordered.

This sequence belongs to the lipase chaperone family.

The protein localises to the cell inner membrane. May be involved in the folding of the extracellular lipase during its passage through the periplasm. In Pseudomonas sp. (strain KWI-56), this protein is Lipase chaperone (lifO).